Consider the following 494-residue polypeptide: ATP synthase subunit beta, plastid (494 aa).

169–176 serves as a coordination point for ATP; the sequence is GGAGVGKT.

This sequence belongs to the ATPase alpha/beta chains family. F-type ATPases have 2 components, CF(1) - the catalytic core - and CF(0) - the membrane proton channel. CF(1) has five subunits: alpha(3), beta(3), gamma(1), delta(1), epsilon(1). CF(0) has four main subunits: a(1), b(1), b'(1) and c(9-12).

The protein localises to the plastid thylakoid membrane. The catalysed reaction is ATP + H2O + 4 H(+)(in) = ADP + phosphate + 5 H(+)(out). Produces ATP from ADP in the presence of a proton gradient across the membrane. The catalytic sites are hosted primarily by the beta subunits. The protein is ATP synthase subunit beta, plastid (atpB) of Cuscuta gronovii (Common dodder).